The chain runs to 222 residues: Putative N-acetylmannosamine-6-phosphate 2-epimerase (222 aa).

This sequence belongs to the NanE family.

It carries out the reaction an N-acyl-D-glucosamine 6-phosphate = an N-acyl-D-mannosamine 6-phosphate. The protein operates within amino-sugar metabolism; N-acetylneuraminate degradation; D-fructose 6-phosphate from N-acetylneuraminate: step 3/5. In terms of biological role, converts N-acetylmannosamine-6-phosphate (ManNAc-6-P) to N-acetylglucosamine-6-phosphate (GlcNAc-6-P). In Staphylococcus saprophyticus subsp. saprophyticus (strain ATCC 15305 / DSM 20229 / NCIMB 8711 / NCTC 7292 / S-41), this protein is Putative N-acetylmannosamine-6-phosphate 2-epimerase.